The chain runs to 315 residues: Methionyl-tRNA formyltransferase (315 aa).

Residue 113-116 participates in (6S)-5,6,7,8-tetrahydrofolate binding; it reads SILP.

This sequence belongs to the Fmt family.

It carries out the reaction L-methionyl-tRNA(fMet) + (6R)-10-formyltetrahydrofolate = N-formyl-L-methionyl-tRNA(fMet) + (6S)-5,6,7,8-tetrahydrofolate + H(+). Attaches a formyl group to the free amino group of methionyl-tRNA(fMet). The formyl group appears to play a dual role in the initiator identity of N-formylmethionyl-tRNA by promoting its recognition by IF2 and preventing the misappropriation of this tRNA by the elongation apparatus. The sequence is that of Methionyl-tRNA formyltransferase from Vibrio parahaemolyticus serotype O3:K6 (strain RIMD 2210633).